A 710-amino-acid chain; its full sequence is Probable thimet oligopeptidase (710 aa).

Residue His502 participates in Zn(2+) binding. Residue Glu503 is part of the active site. Position 506 (His506) interacts with Zn(2+).

It belongs to the peptidase M3 family. Zn(2+) serves as cofactor.

The protein resides in the cytoplasm. It carries out the reaction Preferential cleavage of bonds with hydrophobic residues at P1, P2 and P3' and a small residue at P1' in substrates of 5 to 15 residues.. Involved in cytoplasmic peptide degradation. This chain is Probable thimet oligopeptidase, found in Arabidopsis thaliana (Mouse-ear cress).